We begin with the raw amino-acid sequence, 145 residues long: Transcriptional anti-antiactivator ExsC (145 aa).

As to quaternary structure, homodimer. Interacts with ExsE. Interacts directly with ExsD to form a heterotetrameric complex.

Its subcellular location is the cytoplasm. With respect to regulation, in the absence of inducing signals, ExsE interacts with and inhibits ExsC activity. Functionally, part of the regulatory cascade that plays a role in the transcriptional regulation of the type III secretion system (T3SS). Interacts with antiactivator ExsD to inhibit its activity leading to ExsA-mediated transcription. The chain is Transcriptional anti-antiactivator ExsC (exsC) from Pseudomonas aeruginosa (strain ATCC 15692 / DSM 22644 / CIP 104116 / JCM 14847 / LMG 12228 / 1C / PRS 101 / PAO1).